The sequence spans 106 residues: Large ribosomal subunit protein uL24 (106 aa).

It belongs to the universal ribosomal protein uL24 family. Part of the 50S ribosomal subunit.

Its function is as follows. One of two assembly initiator proteins, it binds directly to the 5'-end of the 23S rRNA, where it nucleates assembly of the 50S subunit. In terms of biological role, one of the proteins that surrounds the polypeptide exit tunnel on the outside of the subunit. The protein is Large ribosomal subunit protein uL24 of Acidovorax sp. (strain JS42).